Consider the following 150-residue polypeptide: Ribosomal RNA large subunit methyltransferase H (150 aa).

S-adenosyl-L-methionine contacts are provided by residues Ile-71, Ala-100, and 118-123; that span reads LSEMTF.

Belongs to the RNA methyltransferase RlmH family. Homodimer.

It localises to the cytoplasm. The enzyme catalyses pseudouridine(1915) in 23S rRNA + S-adenosyl-L-methionine = N(3)-methylpseudouridine(1915) in 23S rRNA + S-adenosyl-L-homocysteine + H(+). Specifically methylates the pseudouridine at position 1915 (m3Psi1915) in 23S rRNA. This is Ribosomal RNA large subunit methyltransferase H from Helicobacter acinonychis (strain Sheeba).